The sequence spans 429 residues: MMTQTDLSAFFGADLATADRDIFDRIGRELGRQQNQIELIASENIVSKAVLEAQGSILTNKYAEGYPGKRYYGGCEYVDEIETIAIERAKALFGAGFANVQPHSGSQANQAVFMALLQPGDTFLGMDLAAGGHLTHGSPANQSGKWFKPISYSVRQQDQLIDYDGVAEVAQREKPKLIIAGGSAYSREIDFAKFREIADSIGAYLMVDMAHYAGLIAGGAYANPIPHAHIVTTTTHKTLRGPRGGLVLTNDEAIIKKVNSAVFPGLQGGPLEHVIAAKAVAFGEALQPSFKDYARQVVANARALAEALLKSGVNIVSGGTDSHLMLVDLRPKGVTGRDAEHSLERAYMTCNKNGVPFDTAPFTITSGIRLGTPAGTTRGFKEAEFTRVGELIGEVVNGLAVNGPEGNAAVEAKVREEVLALTGRFPIYN.

Residues Leu-128 and 132-134 each bind (6S)-5,6,7,8-tetrahydrofolate; that span reads GHL. Residue Lys-237 is modified to N6-(pyridoxal phosphate)lysine.

The protein belongs to the SHMT family. In terms of assembly, homodimer. Pyridoxal 5'-phosphate serves as cofactor.

Its subcellular location is the cytoplasm. The enzyme catalyses (6R)-5,10-methylene-5,6,7,8-tetrahydrofolate + glycine + H2O = (6S)-5,6,7,8-tetrahydrofolate + L-serine. It participates in one-carbon metabolism; tetrahydrofolate interconversion. The protein operates within amino-acid biosynthesis; glycine biosynthesis; glycine from L-serine: step 1/1. Its function is as follows. Catalyzes the reversible interconversion of serine and glycine with tetrahydrofolate (THF) serving as the one-carbon carrier. This reaction serves as the major source of one-carbon groups required for the biosynthesis of purines, thymidylate, methionine, and other important biomolecules. Also exhibits THF-independent aldolase activity toward beta-hydroxyamino acids, producing glycine and aldehydes, via a retro-aldol mechanism. The polypeptide is Serine hydroxymethyltransferase (Caulobacter vibrioides (strain ATCC 19089 / CIP 103742 / CB 15) (Caulobacter crescentus)).